Consider the following 245-residue polypeptide: 5-oxoprolinase subunit A (245 aa).

The protein belongs to the LamB/PxpA family. As to quaternary structure, forms a complex composed of PxpA, PxpB and PxpC.

It carries out the reaction 5-oxo-L-proline + ATP + 2 H2O = L-glutamate + ADP + phosphate + H(+). In terms of biological role, catalyzes the cleavage of 5-oxoproline to form L-glutamate coupled to the hydrolysis of ATP to ADP and inorganic phosphate. This chain is 5-oxoprolinase subunit A, found in Yersinia enterocolitica serotype O:8 / biotype 1B (strain NCTC 13174 / 8081).